A 278-amino-acid polypeptide reads, in one-letter code: Putative transposase for insertion sequence element IS986/IS6110 (278 aa).

One can recognise an Integrase catalytic domain in the interval 101 to 268 (GPPAPNRLWV…VPPVELEAAY (168 aa)).

In terms of biological role, involved in the transposition of the insertion sequence. This is Putative transposase for insertion sequence element IS986/IS6110 from Mycobacterium tuberculosis (strain CDC 1551 / Oshkosh).